The chain runs to 616 residues: Alpha terpineol synthase, chloroplastic (616 aa).

The N-terminal 41 residues, 1–41 (MALLSVAPLQKPLTSCSPFSTTMPTLGVCTPRKVVTPSIIM), are a transit peptide targeting the chloroplast. The Mg(2+) site is built by Asp-367, Asp-371, and Asp-519. Positions 367-371 (DDIYD) match the DDXXD motif motif.

This sequence belongs to the terpene synthase family. Tpsd subfamily. Mg(2+) is required as a cofactor. It depends on Mn(2+) as a cofactor.

The protein resides in the plastid. It is found in the chloroplast. It carries out the reaction (2E)-geranyl diphosphate + H2O = (S)-alpha-terpineol + diphosphate. It catalyses the reaction (2E)-geranyl diphosphate + H2O = 1,8-cineole + diphosphate. The catalysed reaction is (2E)-geranyl diphosphate = beta-myrcene + diphosphate. The enzyme catalyses (2E)-geranyl diphosphate = (1S,5S)-sabinene + diphosphate. The protein operates within terpene metabolism; oleoresin biosynthesis. It functions in the pathway secondary metabolite biosynthesis; terpenoid biosynthesis. Functionally, monoterpene synthase (TPS) involved in the biosynthesis of monoterpene natural products included in conifer oleoresin secretions and volatile emissions; these compounds contribute to biotic and abiotic stress defense against herbivores and pathogens. Catalyzes the conversion of (2E)-geranyl diphosphate (GPP) to alpha-terpineol and, to a lower extent, to 1,8-cineole, myrcene and (-)-sabinene. This is Alpha terpineol synthase, chloroplastic from Pinus contorta (Shore pine).